Reading from the N-terminus, the 102-residue chain is Small ribosomal subunit protein bS6 (102 aa).

This sequence belongs to the bacterial ribosomal protein bS6 family.

Its function is as follows. Binds together with bS18 to 16S ribosomal RNA. In Deinococcus deserti (strain DSM 17065 / CIP 109153 / LMG 22923 / VCD115), this protein is Small ribosomal subunit protein bS6.